The primary structure comprises 200 residues: Protein GrpE (200 aa).

Polar residues predominate over residues 1 to 11 (MSNQTNKAQDN). The interval 1–25 (MSNQTNKAQDNQVEEIVEGELLNEN) is disordered.

Belongs to the GrpE family. In terms of assembly, homodimer.

It localises to the cytoplasm. Its function is as follows. Participates actively in the response to hyperosmotic and heat shock by preventing the aggregation of stress-denatured proteins, in association with DnaK and GrpE. It is the nucleotide exchange factor for DnaK and may function as a thermosensor. Unfolded proteins bind initially to DnaJ; upon interaction with the DnaJ-bound protein, DnaK hydrolyzes its bound ATP, resulting in the formation of a stable complex. GrpE releases ADP from DnaK; ATP binding to DnaK triggers the release of the substrate protein, thus completing the reaction cycle. Several rounds of ATP-dependent interactions between DnaJ, DnaK and GrpE are required for fully efficient folding. The polypeptide is Protein GrpE (Shewanella pealeana (strain ATCC 700345 / ANG-SQ1)).